Reading from the N-terminus, the 535-residue chain is Flavin-containing monooxygenase iboF (535 aa).

The signal sequence occupies residues 1 to 24; sequence MFSLRPTALVSLSVVLFSIQETLS. 60 to 65 is a binding site for FAD; the sequence is GAGPSG. N-linked (GlcNAc...) asparagine glycosylation is found at N134, N243, and N300. Position 307 to 312 (307 to 312) interacts with NADP(+); it reads GAAASG. N-linked (GlcNAc...) asparagine glycans are attached at residues N356, N382, and N410.

Belongs to the FMO family. It depends on FAD as a cofactor.

The protein operates within secondary metabolite biosynthesis. Flavin-containing monooxygenase; part of the gene cluster that mediates the biosynthesis of the psychoactive metabolites ibotenic acid and muscimol. The first committed step is glutamate hydroxylation by the 2-oxoglutarate-dependent dioxygenase iboH, and the last step is decarboxylation of ibotenic acid to muscimol by the decarboxylase iboD. The order of the intermediate reactions is somewhat ambiguous. IboA likely activates the carboxylic acid at position 5 to introduce an amide bond, and the flavin monooxygenase iboF generates the N-O bond. There are several options for the latter step. One option is that iboF directly hydroxylates the amide nitrogen formed by iboA to produce a hydroxamic acid species. Another option is that iboF hydroxylates an external N-containing compound, whose resulting N-O bond is subsequently introduced into the hydroxyglutamate scaffold. The paralogous PLP-dependent cystathionine gamma-synthase-like enzymes iboG1 and iboG2 are likely involved in substitution of the OH group at position 3 by the O-N moiety. The first cyclic intermediate is most probably tricholomic acid which is likely desaturated to ibotenic acid by the cytochrome P450 monooxygenase iboC. This chain is Flavin-containing monooxygenase iboF, found in Amanita muscaria (strain Koide BX008).